A 288-amino-acid polypeptide reads, in one-letter code: Glucose-1-phosphate thymidylyltransferase (288 aa).

Mg(2+)-binding residues include Asp108 and Asp223.

This sequence belongs to the glucose-1-phosphate thymidylyltransferase family. In terms of assembly, homotetramer. Mg(2+) is required as a cofactor.

The enzyme catalyses dTTP + alpha-D-glucose 1-phosphate + H(+) = dTDP-alpha-D-glucose + diphosphate. Functionally, catalyzes the formation of dTDP-glucose, from dTTP and glucose 1-phosphate, as well as its pyrophosphorolysis. This is Glucose-1-phosphate thymidylyltransferase (rmlA1) from Neisseria meningitidis serogroup A / serotype 4A (strain DSM 15465 / Z2491).